The following is a 303-amino-acid chain: uncharacterized protein (303 aa).

At serine 63 the chain carries Phosphoserine.

It belongs to the HAD-like hydrolase superfamily.

The protein resides in the cytoplasm. Its subcellular location is the nucleus. This is an uncharacterized protein from Schizosaccharomyces pombe (strain 972 / ATCC 24843) (Fission yeast).